A 377-amino-acid chain; its full sequence is N-acetyldiaminopimelate deacetylase (377 aa).

Aspartate 69 is an active-site residue. Glutamate 128 acts as the Proton acceptor in catalysis.

The protein belongs to the peptidase M20A family. N-acetyldiaminopimelate deacetylase subfamily.

It catalyses the reaction N-acetyl-(2S,6S)-2,6-diaminopimelate + H2O = (2S,6S)-2,6-diaminopimelate + acetate. The protein operates within amino-acid biosynthesis; L-lysine biosynthesis via DAP pathway; LL-2,6-diaminopimelate from (S)-tetrahydrodipicolinate (acetylase route): step 3/3. In terms of biological role, catalyzes the conversion of N-acetyl-diaminopimelate to diaminopimelate and acetate. This Streptococcus gordonii (strain Challis / ATCC 35105 / BCRC 15272 / CH1 / DL1 / V288) protein is N-acetyldiaminopimelate deacetylase.